The primary structure comprises 437 residues: Transcriptional modulator WTM1 (437 aa).

A WD 1 repeat occupies Tyr103–Ile144. Phosphothreonine is present on Thr187. Position 200 is a phosphoserine (Ser200). WD repeat units lie at residues Pro221 to Trp259, Pro264 to Thr304, and Ala326 to Asn366. Residues Asp368–Arg404 form a disordered region. Thr370 carries the phosphothreonine modification. The span at Arg387–Gly402 shows a compositional bias: basic residues. Thr406 bears the Phosphothreonine mark.

Interacts with KAP122.

It localises to the cytoplasm. Its subcellular location is the nucleus. Its function is as follows. Transcriptional modulator with roles in meiotic regulation and silencing. Acts either as an adapter to facilitate nuclear import by KAP122 of the RNR2-RNR4 heterodimer, also called beta-beta' subunit, which corresponds to the small subunit of the ribonucleotide reductase (RNR); or as an anchor to retain RNR2-RNR4 in the nucleus. The chain is Transcriptional modulator WTM1 (WTM1) from Saccharomyces cerevisiae (strain ATCC 204508 / S288c) (Baker's yeast).